The sequence spans 31 residues: Photosystem II reaction center protein T (31 aa).

A helical transmembrane segment spans residues 3 to 23; that stretch reads SVAYILVLTMALSVIFFAIAF.

This sequence belongs to the PsbT family. In terms of assembly, PSII is composed of 1 copy each of membrane proteins PsbA, PsbB, PsbC, PsbD, PsbE, PsbF, PsbH, PsbI, PsbJ, PsbK, PsbL, PsbM, PsbT, PsbX, PsbY, PsbZ, Psb30/Ycf12, peripheral proteins PsbO, CyanoQ (PsbQ), PsbU, PsbV and a large number of cofactors. It forms dimeric complexes.

The protein resides in the cellular thylakoid membrane. Found at the monomer-monomer interface of the photosystem II (PS II) dimer, plays a role in assembly and dimerization of PSII. PSII is a light-driven water plastoquinone oxidoreductase, using light energy to abstract electrons from H(2)O, generating a proton gradient subsequently used for ATP formation. This Microcystis aeruginosa (strain NIES-843 / IAM M-2473) protein is Photosystem II reaction center protein T.